Reading from the N-terminus, the 317-residue chain is GPI-specific phospholipase A2-like PGAP3 (317 aa).

The signal sequence occupies residues 1–18 (MAPFLVLFLAGVVSASRG). The Lumenal portion of the chain corresponds to 19 to 93 (DREPVYRDCV…QFHGKWPFSR (75 aa)). A glycan (N-linked (GlcNAc...) asparagine) is linked at N35. The chain crosses the membrane as a helical span at residues 94–114 (FLFFQEPASALASFLNGVASL). At 115-132 (LMLFRYRSSVPSSCQMYR) the chain is on the cytoplasmic side. The chain crosses the membrane as a helical span at residues 133–153 (TCLAFSMVSVNAWFWSTIFHT). The Lumenal portion of the chain corresponds to 154-163 (RDTALTEKMD). A helical membrane pass occupies residues 164–180 (YFCASSVILHSIYLCCM). The Cytoplasmic portion of the chain corresponds to 181–189 (RTFGLQYPS). The chain crosses the membrane as a helical span at residues 190 to 210 (IANAFGAFLVLLFACHISYLT). The Lumenal portion of the chain corresponds to 211–219 (LGRFDYSYN). A helical membrane pass occupies residues 220-240 (MAANTSFGIVNLMWWLAWCMW). Topologically, residues 241-251 (RRFHQPYLWKC) are cytoplasmic. The helical transmembrane segment at 252–272 (VLVVVLLQSLALLELLDFPPV) threads the bilayer. Position 273 (M273) is a topological domain, lumenal. The chain crosses the membrane as a helical span at residues 274–293 (WILDAHALWHFSTIPLHFLF). The Cytoplasmic portion of the chain corresponds to 294–317 (YSFLRDDSLYLLKVNHDDDIPKLD).

This sequence belongs to the PGAP3 family.

The protein resides in the golgi apparatus membrane. In terms of biological role, involved in the fatty acid remodeling steps of GPI-anchor maturation where the unsaturated acyl chain at sn-2 of inositol phosphate is replaced by a saturated stearoyl chain. May catalyze the first step of the fatty acid remodeling, by removing the unsaturated acyl chain at sn-2 of inositol phosphate, generating a lyso-GPI intermediate. The fatty acid remodeling steps is critical for the integration of GPI-APs into lipid rafts. The polypeptide is GPI-specific phospholipase A2-like PGAP3 (Xenopus laevis (African clawed frog)).